Here is a 199-residue protein sequence, read N- to C-terminus: MLVPIVVEQTGRGERSYDIYSRLLKDRIIFLGGPVDDHVANLVIAQMLFLEAEDPDKDIHLYINSPGGVVTSGMAIYDTMQYIKAPVSTICVGQAASMGALLLSGGEKGKRFSLKHSRIMIHQPLGGFQGQATDIHIHAQEILKLKKRLNEILAENTGQQLAKVEADTERDYFMSGAEAKDYGIIDNIIERNTPSGGTR.

The active-site Nucleophile is S97. Residue H122 is part of the active site.

It belongs to the peptidase S14 family. Fourteen ClpP subunits assemble into 2 heptameric rings which stack back to back to give a disk-like structure with a central cavity, resembling the structure of eukaryotic proteasomes.

Its subcellular location is the cytoplasm. The catalysed reaction is Hydrolysis of proteins to small peptides in the presence of ATP and magnesium. alpha-casein is the usual test substrate. In the absence of ATP, only oligopeptides shorter than five residues are hydrolyzed (such as succinyl-Leu-Tyr-|-NHMec, and Leu-Tyr-Leu-|-Tyr-Trp, in which cleavage of the -Tyr-|-Leu- and -Tyr-|-Trp bonds also occurs).. In terms of biological role, cleaves peptides in various proteins in a process that requires ATP hydrolysis. Has a chymotrypsin-like activity. Plays a major role in the degradation of misfolded proteins. The chain is ATP-dependent Clp protease proteolytic subunit from Geobacter sulfurreducens (strain ATCC 51573 / DSM 12127 / PCA).